The primary structure comprises 189 residues: Interferon alpha-F (189 aa).

Positions 1–23 (MAPAWSLLLALLLLSCNAICSLG) are cleaved as a signal peptide. Disulfide bonds link C24–C122 and C52–C162.

The protein belongs to the alpha/beta interferon family.

It is found in the secreted. Its function is as follows. Produced by macrophages, IFN-alpha have antiviral activities. Interferon stimulates the production of two enzymes: a protein kinase and an oligoadenylate synthetase. This chain is Interferon alpha-F (IFNAF), found in Bos taurus (Bovine).